Reading from the N-terminus, the 316-residue chain is Olfactory receptor 10H28 (316 aa).

At methionine 1 to proline 26 the chain is on the extracellular side. Residue asparagine 5 is glycosylated (N-linked (GlcNAc...) asparagine). A helical membrane pass occupies residues alanine 27–methionine 47. Residues alanine 48–histidine 57 are Cytoplasmic-facing. Residues threonine 58–isoleucine 78 form a helical membrane-spanning segment. The Extracellular segment spans residues threonine 79–asparagine 100. An intrachain disulfide couples cysteine 98 to cysteine 190. The chain crosses the membrane as a helical span at residues glutamine 101–tyrosine 121. Residues aspartate 122 to arginine 144 lie on the Cytoplasmic side of the membrane. A helical membrane pass occupies residues leucine 145–phenylalanine 165. Topologically, residues histidine 166 to threonine 207 are extracellular. A helical membrane pass occupies residues proline 208–leucine 228. Topologically, residues arginine 229–serine 241 are cytoplasmic. A helical transmembrane segment spans residues threonine 242–leucine 262. At lysine 263–aspartate 273 the chain is on the extracellular side. A helical transmembrane segment spans residues threonine 274 to leucine 294. Residues arginine 295–isoleucine 316 lie on the Cytoplasmic side of the membrane.

This sequence belongs to the G-protein coupled receptor 1 family.

It localises to the cell membrane. In terms of biological role, odorant receptor. The protein is Olfactory receptor 10H28 of Mus musculus (Mouse).